Consider the following 1049-residue polypeptide: Carbamoyl phosphate synthase large chain (1049 aa).

Positions 1-399 are carboxyphosphate synthetic domain; sequence MRESVRKVLV…SLQKAVRMLD (399 aa). 12 residues coordinate ATP: Arg-127, Arg-167, Gly-173, Gly-174, Lys-206, Leu-208, Glu-213, Gly-239, Val-240, His-241, Gln-282, and Glu-296. Positions 131–325 constitute an ATP-grasp 1 domain; that stretch reads RETMINVGLP…LAYVSAKLAL (195 aa). Gln-282, Glu-296, and Asn-298 together coordinate Mg(2+). Positions 282, 296, and 298 each coordinate Mn(2+). The segment at 400–548 is oligomerization domain; sequence IGEPGVVGGK…LTYNGTEDDI (149 aa). Residues 549-930 form a carbamoyl phosphate synthetic domain region; it reads EFSEAGNKLL…LKSWLSSSPN (382 aa). An ATP-grasp 2 domain is found at 674 to 864; the sequence is SKLLDKLGIK…IISLALDGIL (191 aa). ATP is bound by residues Arg-710, Lys-749, Leu-751, Glu-756, Gly-780, Val-781, His-782, Ser-783, Gln-823, and Glu-835. Mg(2+) contacts are provided by Gln-823, Glu-835, and Asn-837. Residues Gln-823, Glu-835, and Asn-837 each coordinate Mn(2+). An MGS-like domain is found at 930-1049; sequence NKIPNKEGIA…YEISEYGAGI (120 aa). Residues 931–1049 form an allosteric domain region; it reads KIPNKEGIAL…YEISEYGAGI (119 aa).

This sequence belongs to the CarB family. In terms of assembly, composed of two chains; the small (or glutamine) chain promotes the hydrolysis of glutamine to ammonia, which is used by the large (or ammonia) chain to synthesize carbamoyl phosphate. Tetramer of heterodimers (alpha,beta)4. The cofactor is Mg(2+). Mn(2+) is required as a cofactor.

It carries out the reaction hydrogencarbonate + L-glutamine + 2 ATP + H2O = carbamoyl phosphate + L-glutamate + 2 ADP + phosphate + 2 H(+). The catalysed reaction is hydrogencarbonate + NH4(+) + 2 ATP = carbamoyl phosphate + 2 ADP + phosphate + 2 H(+). The protein operates within amino-acid biosynthesis; L-arginine biosynthesis; carbamoyl phosphate from bicarbonate: step 1/1. It participates in pyrimidine metabolism; UMP biosynthesis via de novo pathway; (S)-dihydroorotate from bicarbonate: step 1/3. Large subunit of the glutamine-dependent carbamoyl phosphate synthetase (CPSase). CPSase catalyzes the formation of carbamoyl phosphate from the ammonia moiety of glutamine, carbonate, and phosphate donated by ATP, constituting the first step of 2 biosynthetic pathways, one leading to arginine and/or urea and the other to pyrimidine nucleotides. The large subunit (synthetase) binds the substrates ammonia (free or transferred from glutamine from the small subunit), hydrogencarbonate and ATP and carries out an ATP-coupled ligase reaction, activating hydrogencarbonate by forming carboxy phosphate which reacts with ammonia to form carbamoyl phosphate. This chain is Carbamoyl phosphate synthase large chain, found in Sulfurisphaera tokodaii (strain DSM 16993 / JCM 10545 / NBRC 100140 / 7) (Sulfolobus tokodaii).